Consider the following 551-residue polypeptide: MTHLPHWWQNGVIYQIYPKSFQDTTGSGTGDLRGVIQHLDYLHKLGVDAIWLTPFYVSPQVDNGYDVANYTAIDPTYGTLDDFDELVTQAKSRGIRIILDMVFNHTSTQHAWFREALNKESPYRQFYIWRDGEPETPPNNWRSKFGGSAWRWHAESEQYYLHLFAPEQADLNWENPAVRAELKKVCEFWADRGVDGLRLDVVNLISKDPRFPEDLDGDGRRFYTDGPRAHEFLHEMNRDVFTPRGLMTVGEMSSTSLEHCQRYAALTGSELSMTFNFHHLKVDYPGGEKWTLAKPDFVALKTLFRHWQQGMHNVAWNALFWCNHDQPRIVSRFGDEGEYRVPAAKMLAMVLHGMQGTPYIYQGEEIGMTNPHFTRITDYRDVESLNMFAELRNDGRDADELLAILASKSRDNSRTPMQWSNGDNAGFTAGEPWIGLGDNYQQINVEAALADDSSVFYTYQKLIALRKQEAILTWGNYQDLLPNSPVLWCYRREWKGQTLLVIANLSREIQPWQAGQMRGNWQLVMHNYEEASPQPCAMNLRPFEAVWWLQK.

The active-site Nucleophile is Asp-200. Glu-251 (proton donor) is an active-site residue.

The protein belongs to the glycosyl hydrolase 13 family.

The protein localises to the cytoplasm. It catalyses the reaction alpha,alpha-trehalose 6-phosphate + H2O = D-glucose 6-phosphate + D-glucose. Its function is as follows. Hydrolyzes trehalose-6-phosphate to glucose and glucose 6-phosphate. Can also very effectively hydrolyze p-nitrophenyl-alpha-D-glucopyranoside, but it does not recognize trehalose, sucrose, maltose, isomaltose, or maltodextrins. The polypeptide is Trehalose-6-phosphate hydrolase (treC) (Escherichia coli (strain K12)).